A 172-amino-acid chain; its full sequence is Large ribosomal subunit protein uL10 (172 aa).

It belongs to the universal ribosomal protein uL10 family. Part of the ribosomal stalk of the 50S ribosomal subunit. The N-terminus interacts with L11 and the large rRNA to form the base of the stalk. The C-terminus forms an elongated spine to which L12 dimers bind in a sequential fashion forming a multimeric L10(L12)X complex.

Functionally, forms part of the ribosomal stalk, playing a central role in the interaction of the ribosome with GTP-bound translation factors. This Bartonella henselae (strain ATCC 49882 / DSM 28221 / CCUG 30454 / Houston 1) (Rochalimaea henselae) protein is Large ribosomal subunit protein uL10.